The following is a 235-amino-acid chain: Putative N-acetylmannosamine-6-phosphate 2-epimerase (235 aa).

The protein belongs to the NanE family.

The enzyme catalyses an N-acyl-D-glucosamine 6-phosphate = an N-acyl-D-mannosamine 6-phosphate. It functions in the pathway amino-sugar metabolism; N-acetylneuraminate degradation; D-fructose 6-phosphate from N-acetylneuraminate: step 3/5. Converts N-acetylmannosamine-6-phosphate (ManNAc-6-P) to N-acetylglucosamine-6-phosphate (GlcNAc-6-P). This is Putative N-acetylmannosamine-6-phosphate 2-epimerase from Edwardsiella ictaluri (strain 93-146).